Consider the following 86-residue polypeptide: Diphthamide biosynthesis protein 3 (86 aa).

The 57-residue stretch at 4 to 60 (YHDEVEIEDFEYDEEEEMYYYPCPCGDRFQISKEELIEGEEVATCPSCSLVIKVIYD) folds into the DPH-type MB domain. Positions 26, 28, 48, and 51 each coordinate Fe cation.

The protein belongs to the DPH3 family. Component of the 2-(3-amino-3-carboxypropyl)histidine synthase complex composed of Dph1, Dph2, Dph3 and a NADH-dependent reductase. Fe(2+) serves as cofactor.

It carries out the reaction [3Fe-4S](1+)-[protein] + Fe(2+)-[Dph3] = [3Fe-4S](0)-[protein] + Fe(3+)-[Dph3]. The enzyme catalyses 2 [3Fe-4S](0)-[protein] + 2 Fe(2+)-[Dph3] + NADH = 2 [4Fe-4S](1+)-[protein] + 2 [Dph3] + NAD(+) + H(+). Its pathway is protein modification; peptidyl-diphthamide biosynthesis. Its function is as follows. Required for the first step of diphthamide biosynthesis, a post-translational modification of histidine which occurs in elongation factor 2. Dph1 and Dph2 transfer a 3-amino-3-carboxypropyl (ACP) group from S-adenosyl-L-methionine (SAM) to a histidine residue, the reaction is assisted by a reduction system comprising Dph3 and a NADH-dependent reductase. Acts as an electron donor to reduce the Fe-S cluster in Dph1-Dph2 keeping the [4Fe-4S] clusters in the active and reduced state. Restores iron to Dph1-Dph2 iron-sulfur clusters which have degraded from [4Fe-4S] to [3Fe-4S] by donating an iron atom to reform [4Fe-4S] clusters, in a manner dependent on the presence of elongation factor 2 and SAM. Associates with the elongator complex and is required for tRNA Wobble base modifications mediated by the elongator complex. The elongator complex is required for multiple tRNA modifications, including mcm5U (5-methoxycarbonylmethyl uridine), mcm5s 2U (5-methoxycarbonylmethyl-2-thiouridine), and ncm5U (5-carbamoylmethyl uridine). The protein is Diphthamide biosynthesis protein 3 of Drosophila melanogaster (Fruit fly).